The following is a 701-amino-acid chain: Peptide transporter CstA (701 aa).

Topologically, residues methionine 1–lysine 6 are cytoplasmic. A helical transmembrane segment spans residues tyrosine 7–asparagine 27. Over arginine 28–asparagine 33 the chain is Periplasmic. The chain crosses the membrane as a helical span at residues alanine 34–leucine 54. At tyrosine 55–lysine 86 the chain is on the cytoplasmic side. The chain crosses the membrane as a helical span at residues valine 87–leucine 107. Residues alanine 108–methionine 117 are Periplasmic-facing. The chain crosses the membrane as a helical span at residues isoleucine 118–valine 138. The Cytoplasmic portion of the chain corresponds to serine 139 to glycine 160. The chain crosses the membrane as a helical span at residues valine 161–isoleucine 181. Topologically, residues valine 182 to serine 189 are periplasmic. Residues proline 190–leucine 210 form a helical membrane-spanning segment. Residues arginine 211–arginine 217 lie on the Cytoplasmic side of the membrane. The helical transmembrane segment at isoleucine 218 to tryptophan 238 threads the bilayer. At valine 239–glutamine 255 the chain is on the periplasmic side. Residues leucine 256 to leucine 276 form a helical membrane-spanning segment. Topologically, residues alanine 277–aspartate 280 are cytoplasmic. The chain crosses the membrane as a helical span at residues tyrosine 281–methionine 301. The Periplasmic segment spans residues arginine 302–asparagine 324. Residues leucine 325–isoleucine 345 traverse the membrane as a helical segment. Residues serine 346 to serine 372 are Cytoplasmic-facing. Residues phenylalanine 373–methionine 393 form a helical membrane-spanning segment. The Periplasmic segment spans residues asparagine 394–serine 395. Residues proline 396 to valine 416 form a helical membrane-spanning segment. Residues serine 417–serine 439 are Cytoplasmic-facing. The helical transmembrane segment at isoleucine 440–glycine 460 threads the bilayer. Residues alanine 461–glycine 463 are Periplasmic-facing. Residues glycine 464 to leucine 484 form a helical membrane-spanning segment. The Cytoplasmic segment spans residues threonine 485–alanine 523. The helical transmembrane segment at leucine 524–isoleucine 544 threads the bilayer. Residues asparagine 545–leucine 550 lie on the Periplasmic side of the membrane. A helical transmembrane segment spans residues phenylalanine 551–phenylalanine 571. The Cytoplasmic segment spans residues lysine 572–arginine 577. The chain crosses the membrane as a helical span at residues tyrosine 578–tryptophan 598. Residues glutamine 599 to arginine 643 are Periplasmic-facing. A helical membrane pass occupies residues leucine 644 to isoleucine 664. Residues lysine 665–histidine 701 lie on the Cytoplasmic side of the membrane.

The protein belongs to the peptide transporter carbon starvation (CstA) (TC 2.A.114) family.

Its subcellular location is the cell inner membrane. Functionally, involved in peptide utilization during carbon starvation. The chain is Peptide transporter CstA from Escherichia coli (strain K12).